A 296-amino-acid chain; its full sequence is SPbeta prophage-derived endonuclease YokF (296 aa).

The signal sequence occupies residues 1 to 19; it reads MKKVLLGFAAFTLSLSLAA. Cysteine 20 carries the N-palmitoyl cysteine lipid modification. The S-diacylglycerol cysteine moiety is linked to residue cysteine 20. A disordered region spans residues 20 to 65; the sequence is CSSNDSEKVSTEKETPQASTDVEKKTEQKESTKEKTADKSKEKDKK. Basic and acidic residues predominate over residues 24-65; it reads DSEKVSTEKETPQASTDVEKKTEQKESTKEKTADKSKEKDKK. Positions 66–199 constitute a TNase-like domain; the sequence is ELVDVTLDRA…KSEKLSIWSK (134 aa). Aspartate 79 contacts Ca(2+). Arginine 93 is a catalytic residue. 2 residues coordinate Ca(2+): aspartate 98 and threonine 99. Active-site residues include glutamate 101 and arginine 144. The interval 218-296 is disordered; the sequence is AVKKATTSKP…RDHDNYACER (79 aa). Low complexity predominate over residues 219–244; the sequence is VKKATTSKPAATQPTTPKASSETSTT. The segment covering 284-296 has biased composition (basic and acidic residues); sequence KMDRDHDNYACER.

The cofactor is Ca(2+). It depends on Cu(2+) as a cofactor. Mn(2+) is required as a cofactor.

The protein localises to the cell membrane. Inhibited by aurintricalboxylic acid but not by Zn(2+), Mn(2+), Hg(2+), 2-mercaptoethanol and sodium citrate. Neither inhibited nor activated by ATP. Catalyzes the hydrolysis of supercoiled double and single strand DNA and RNA. Involved in chromosomal DNA degradation and cell death caused by thermal stress. The chain is SPbeta prophage-derived endonuclease YokF (yokF) from Bacillus subtilis (strain 168).